The primary structure comprises 110 residues: Nucleoid-associated protein Mkms_4993 (110 aa).

The protein belongs to the YbaB/EbfC family. As to quaternary structure, homodimer.

It localises to the cytoplasm. It is found in the nucleoid. Binds to DNA and alters its conformation. May be involved in regulation of gene expression, nucleoid organization and DNA protection. The polypeptide is Nucleoid-associated protein Mkms_4993 (Mycobacterium sp. (strain KMS)).